The sequence spans 580 residues: Amino-acid acetyltransferase, mitochondrial (580 aa).

Residues 403-560 (LTMQNLFDDK…NPRHKNGVVN (158 aa)) form the N-acetyltransferase domain.

The protein belongs to the acetyltransferase family.

Its subcellular location is the mitochondrion. It carries out the reaction L-glutamate + acetyl-CoA = N-acetyl-L-glutamate + CoA + H(+). It functions in the pathway amino-acid biosynthesis; L-arginine biosynthesis; N(2)-acetyl-L-ornithine from L-glutamate: step 1/4. Functionally, N-acetylglutamate synthase involved in arginine biosynthesis. This chain is Amino-acid acetyltransferase, mitochondrial (ARG2), found in Candida dubliniensis (strain CD36 / ATCC MYA-646 / CBS 7987 / NCPF 3949 / NRRL Y-17841) (Yeast).